Consider the following 212-residue polypeptide: Ropporin-1 (212 aa).

One can recognise an RIIa domain in the interval 12–49; sequence PELPKMLKEFAKAAIRAQPQDLIQWGADYFEALSRGET. Residue Ser56 is modified to Phosphoserine. An interaction with RHPN1 region spans residues 209–212; sequence VWLE.

This sequence belongs to the ropporin family. As to quaternary structure, homodimer. Interacts with AKAP3. May interact with SPA17. Interacts with RHPN1. Interacts with FSCB; the interaction increases upon spermatozoa capacitation conditions. Interacts with CFAP61. Post-translationally, sumoylated, sumoylation decreases upon spermatozoa capacitation conditions.

It is found in the cell projection. It localises to the cilium. The protein resides in the flagellum. Its function is as follows. Important for male fertility. With ROPN1L, involved in fibrous sheath integrity and sperm motility, plays a role in PKA-dependent signaling processes required for spermatozoa capacitation. The sequence is that of Ropporin-1 (ROPN1) from Macaca fascicularis (Crab-eating macaque).